The chain runs to 403 residues: MSKFNRIHLVVLDSVGIGAAPDADKFFNAGVADTDSDTLGHISETAGLSVPNMVKIGLGNISRPIPLKTVPTEDNPTGYVTKLEEVSLGKDTMTGHWEIMGLNITEPFDTFWNGFPEEILTKIEEFSGRKIIREANKPYSGTAVIDDFGPRQMETGELIVYTSADPVLQIAAHEDIIPVEELYKICEYARSITLERPALLGRIIARPYVGEPGNFTRTANRHDYAVSPFQDTVLNKLADAGVPTYAVGKINDIFNGSGITNDMGHNKSNSHGIDTLIKTLQLPEFTKGFSFTNLVDFDANFGHRRDSEGYRDCLHEFDNRLPEIIANMKEDDLLLITADHGNDPTYAGTDHTREYIPLLAYSASFTGNGLIPQGHFADISATVAENFGVDTAMIGESFLGHLK.

Mn(2+) contacts are provided by D13, D298, H303, D339, H340, and H351.

This sequence belongs to the phosphopentomutase family. Mn(2+) is required as a cofactor.

The protein localises to the cytoplasm. It carries out the reaction 2-deoxy-alpha-D-ribose 1-phosphate = 2-deoxy-D-ribose 5-phosphate. It catalyses the reaction alpha-D-ribose 1-phosphate = D-ribose 5-phosphate. The protein operates within carbohydrate degradation; 2-deoxy-D-ribose 1-phosphate degradation; D-glyceraldehyde 3-phosphate and acetaldehyde from 2-deoxy-alpha-D-ribose 1-phosphate: step 1/2. Its function is as follows. Isomerase that catalyzes the conversion of deoxy-ribose 1-phosphate (dRib-1-P) and ribose 1-phosphate (Rib-1-P) to deoxy-ribose 5-phosphate (dRib-5-P) and ribose 5-phosphate (Rib-5-P), respectively. The protein is Phosphopentomutase of Streptococcus pyogenes serotype M5 (strain Manfredo).